Reading from the N-terminus, the 139-residue chain is Large ribosomal subunit protein bL17 (139 aa).

The disordered stretch occupies residues 120–139; sequence EDAKGRDSGPTQDNSEAEAA.

Part of the 50S ribosomal subunit. Contacts protein L32. May be methylated thrice, on undetermined residues.

In Rhodopseudomonas palustris (strain ATCC BAA-98 / CGA009), this protein is Large ribosomal subunit protein bL17.